A 420-amino-acid polypeptide reads, in one-letter code: Adenylosuccinate synthetase (420 aa).

GTP is bound by residues 11 to 17 (GDEGKGK) and 39 to 41 (GHT). Asp12 functions as the Proton acceptor in the catalytic mechanism. Asp12 and Gly39 together coordinate Mg(2+). IMP contacts are provided by residues 12–15 (DEGK), 37–40 (NAGH), Thr129, Arg143, Asn218, Thr233, and Arg297. The active-site Proton donor is the His40. 293–299 (VTTGRKR) lines the substrate pocket. GTP contacts are provided by residues Arg299, 325 to 327 (KLD), and 407 to 409 (GTG).

It belongs to the adenylosuccinate synthetase family. As to quaternary structure, homodimer. Requires Mg(2+) as cofactor.

The protein resides in the cytoplasm. It carries out the reaction IMP + L-aspartate + GTP = N(6)-(1,2-dicarboxyethyl)-AMP + GDP + phosphate + 2 H(+). It participates in purine metabolism; AMP biosynthesis via de novo pathway; AMP from IMP: step 1/2. In terms of biological role, plays an important role in the de novo pathway and in the salvage pathway of purine nucleotide biosynthesis. Catalyzes the first committed step in the biosynthesis of AMP from IMP. The chain is Adenylosuccinate synthetase from Uncinocarpus reesii (strain UAMH 1704).